Reading from the N-terminus, the 914-residue chain is Caprin-2 (914 aa).

7 disordered regions span residues 259-283 (PLPK…PSGL), 298-326 (EFLN…KEDF), 367-411 (KTVD…LPKD), 439-480 (DGES…SSQR), 495-529 (CLSN…PPLY), 608-631 (HRSF…PELN), and 718-747 (GAGT…AYPL). Basic and acidic residues predominate over residues 264-273 (DSQEKTETIK). Positions 274-283 (PDSQSRPSGL) are enriched in polar residues. Basic and acidic residues predominate over residues 370-392 (DIVKRSTTDPKEKRQRKKAEQDS). A compositionally biased stretch (polar residues) spans 469-480 (KSPSDILPSSQR). Residues 508 to 520 (LELHSEDKPRKQA) show a composition bias toward basic and acidic residues. Residues 610–626 (SFTSAKTSSVTTASTQT) show a composition bias toward low complexity. The segment covering 718–738 (GAGTATQRSSAGWSDSSQVSS) has biased composition (polar residues). One can recognise a C1q domain in the interval 780–914 (LTQLRVAFSA…TFSGFLLYQD (135 aa)). 2 residues coordinate Ca(2+): Asp-865 and Glu-871.

It belongs to the caprin family. Homotrimer; via C1q domain.

The protein resides in the cytoplasm. Its subcellular location is the cell membrane. Promotes phosphorylation of the Wnt coreceptor LRP6, leading to increased activity of the canonical Wnt signaling pathway. Facilitates constitutive LRP6 phosphorylation by CDK14/CCNY during G2/M stage of the cell cycle, which may potentiate cells for Wnt signaling. May regulate the transport and translation of mRNAs, modulating for instance the expression of proteins involved in synaptic plasticity in neurons. Involved in regulation of growth as erythroblasts shift from a highly proliferative state towards their terminal phase of differentiation. May be involved in apoptosis. In Danio rerio (Zebrafish), this protein is Caprin-2.